A 945-amino-acid chain; its full sequence is Isoleucine--tRNA ligase 1 (945 aa).

A 'HIGH' region motif is present at residues 66–76 (PYANGDIHLGH). An L-isoleucyl-5'-AMP-binding site is contributed by Glu-581. The 'KMSKS' region signature appears at 622–626 (KMSKS). Position 625 (Lys-625) interacts with ATP. Positions 908, 911, 928, and 931 each coordinate Zn(2+).

Belongs to the class-I aminoacyl-tRNA synthetase family. IleS type 1 subfamily. Monomer. Zn(2+) serves as cofactor.

The protein resides in the cytoplasm. The catalysed reaction is tRNA(Ile) + L-isoleucine + ATP = L-isoleucyl-tRNA(Ile) + AMP + diphosphate. Functionally, catalyzes the attachment of isoleucine to tRNA(Ile). As IleRS can inadvertently accommodate and process structurally similar amino acids such as valine, to avoid such errors it has two additional distinct tRNA(Ile)-dependent editing activities. One activity is designated as 'pretransfer' editing and involves the hydrolysis of activated Val-AMP. The other activity is designated 'posttransfer' editing and involves deacylation of mischarged Val-tRNA(Ile). The protein is Isoleucine--tRNA ligase 1 of Burkholderia pseudomallei (strain K96243).